We begin with the raw amino-acid sequence, 309 residues long: Mitochondrial phosphate carrier protein 1, mitochondrial (309 aa).

The Mitochondrial intermembrane segment spans residues 1–15 (MTRVKSKLDEELSSP). A helical transmembrane segment spans residues 16 to 36 (WFYTVCTMGGMLSAGTTHLAI). Solcar repeat units lie at residues 16–100 (WFYT…FKTL), 109–193 (NRTS…SVEF), and 210–289 (QQLG…IKVL). Topologically, residues 37–74 (TPLDVLKVNMQVNPVKYNSIPSGFSTLLREHGHSYLWR) are mitochondrial matrix. The chain crosses the membrane as a helical span at residues 75–94 (GWSGKLLGYGVQGGCRFGLY). Over 95–111 (EYFKTLYSDVLPNHNRT) the chain is Mitochondrial intermembrane. The helical transmembrane segment at 112–132 (SIYFLSSASAQIFADMALCPF) threads the bilayer. Residues 133–167 (EAIKVRVQTQPMFAKGLLDGFPRVYRSEGLAGFHR) are Mitochondrial matrix-facing. Residues 168–187 (GLFPLWCRNLPFSMVMFSTF) traverse the membrane as a helical segment. Over 188–208 (EQSVEFIYQKIIQKRKQDCSK) the chain is Mitochondrial intermembrane. Residues 209–229 (AQQLGVTCLAGYTAGAVGTII) traverse the membrane as a helical segment. The Mitochondrial matrix segment spans residues 230–268 (SNPADVVLSSLYNNKAKNVLQAVRNIGFVGLFTRSLPVR). The chain crosses the membrane as a helical span at residues 269–289 (ITIVGPVITLQWFFYDAIKVL). Residues 290-309 (SGFPTSGGVKKPVDAAKLSV) are Mitochondrial intermembrane-facing.

Belongs to the mitochondrial carrier (TC 2.A.29) family. Expressed in stems, leaves and flowers. Strong expression in the stamens of flowers.

It is found in the mitochondrion inner membrane. Functionally, transport of phosphate groups from the cytosol to the mitochondrial matrix. Mediates salt stress tolerance through an ATP-dependent pathway and via modulation of the gibberellin metabolism. In Arabidopsis thaliana (Mouse-ear cress), this protein is Mitochondrial phosphate carrier protein 1, mitochondrial (MPT1).